Consider the following 202-residue polypeptide: Small heat shock protein hspG5 (202 aa).

The sHSP domain maps to lysine 31–asparagine 202. The segment at threonine 96 to asparagine 138 is disordered.

It belongs to the small heat shock protein (HSP20) family.

The chain is Small heat shock protein hspG5 (hspG5) from Dictyostelium discoideum (Social amoeba).